We begin with the raw amino-acid sequence, 727 residues long: Long-chain-fatty-acid--[acyl-carrier-protein] ligase AEE15, chloroplastic (727 aa).

The transit peptide at 1–66 (MQIRLKPDYS…PSFRRFRVHC (66 aa)) directs the protein to the chloroplast.

This sequence belongs to the ATP-dependent AMP-binding enzyme family.

The protein resides in the plastid. It is found in the chloroplast. The enzyme catalyses a long-chain fatty acid + holo-[ACP] + ATP = a long-chain fatty acyl-[ACP] + AMP + diphosphate. Functionally, probably involved in the activation of fatty acids to acyl-carrier-protein prior to fatty acid elongation in plastids. Acts on medium- to long-chain fatty acids. This Arabidopsis thaliana (Mouse-ear cress) protein is Long-chain-fatty-acid--[acyl-carrier-protein] ligase AEE15, chloroplastic (AAE15).